We begin with the raw amino-acid sequence, 270 residues long: Meiotic recombination 1 protein (270 aa).

The KH domain maps to 191–225 (EIKLNKTQITFLIGAKGTRIESLREKSGASIKIIP).

In terms of biological role, required for chromosome pairing and genetic recombination. MER1 may function to bring the axial elements of the synaptonemal complex corresponding to homologous chromosomes together by initiating recombination. MER1 might be responsible for regulating the MER2 gene and/or gene product. The chain is Meiotic recombination 1 protein (MER1) from Saccharomyces cerevisiae (strain ATCC 204508 / S288c) (Baker's yeast).